Reading from the N-terminus, the 573-residue chain is Protein DSE1 (573 aa).

WD repeat units lie at residues 144-185, 315-351, 356-395, and 397-448; these read DFPP…GCAK, RKNTSLDCVWISNHHVAQSLNDKIQIWDIQSCDGKPV, AKKGYIESLKFNENTGALYSSDDQGFVICWDLQNLQNMKY, and ELVH…NGKG. The segment covering 500-509 has biased composition (low complexity); that stretch reads SDSSMLSLSN. The tract at residues 500 to 519 is disordered; the sequence is SDSSMLSLSNESDHSMTETS. Residue Lys553 forms a Glycyl lysine isopeptide (Lys-Gly) (interchain with G-Cter in ubiquitin) linkage.

This sequence belongs to the WD repeat DSE1 family.

It is found in the bud neck. Involved in cell wall metabolism and required for the separation of the mother and daughter cells. In Saccharomyces cerevisiae (strain ATCC 204508 / S288c) (Baker's yeast), this protein is Protein DSE1 (DSE1).